We begin with the raw amino-acid sequence, 138 residues long: Host cell factor C1 regulator 1 (138 aa).

Residues 76–79 are interaction with HCFC1; that stretch reads DHPY. Positions 110–119 match the Nuclear export signal motif; it reads IPEALRLLRL.

In terms of assembly, interacts with HCFC1. In terms of tissue distribution, widely expressed.

It localises to the cytoplasm. The protein localises to the nucleus. In terms of biological role, regulates HCFC1 activity by modulating its subcellular localization. Overexpression of HCFC1R1 leads to accumulation of HCFC1 in the cytoplasm. HCFC1R1-mediated export may provide the pool of cytoplasmic HCFC1 required for import of virion-derived VP16 into the nucleus. This is Host cell factor C1 regulator 1 (HCFC1R1) from Homo sapiens (Human).